The following is a 234-amino-acid chain: Orotidine 5'-phosphate decarboxylase (234 aa).

Residues Asp11, Lys33, 60 to 69 (DLKFHDIPNT), Thr120, Arg181, Gln190, Gly210, and Arg211 contribute to the substrate site. Residue Lys62 is the Proton donor of the active site.

Belongs to the OMP decarboxylase family. Type 1 subfamily. In terms of assembly, homodimer.

The enzyme catalyses orotidine 5'-phosphate + H(+) = UMP + CO2. It participates in pyrimidine metabolism; UMP biosynthesis via de novo pathway; UMP from orotate: step 2/2. Catalyzes the decarboxylation of orotidine 5'-monophosphate (OMP) to uridine 5'-monophosphate (UMP). The chain is Orotidine 5'-phosphate decarboxylase from Aliivibrio salmonicida (strain LFI1238) (Vibrio salmonicida (strain LFI1238)).